We begin with the raw amino-acid sequence, 285 residues long: Acetyl-coenzyme A carboxylase carboxyl transferase subunit beta (285 aa).

A CoA carboxyltransferase N-terminal domain is found at 23-285; the sequence is VFRRCDGCSH…HLTAGRRARR (263 aa). Cysteine 27, cysteine 30, cysteine 46, and cysteine 49 together coordinate Zn(2+). The segment at 27-49 adopts a C4-type zinc-finger fold; it reads CDGCSHTHDAAELARTFEVCSQC.

The protein belongs to the AccD/PCCB family. As to quaternary structure, acetyl-CoA carboxylase is a heterohexamer composed of biotin carboxyl carrier protein (AccB), biotin carboxylase (AccC) and two subunits each of ACCase subunit alpha (AccA) and ACCase subunit beta (AccD). Zn(2+) is required as a cofactor.

The protein resides in the cytoplasm. The catalysed reaction is N(6)-carboxybiotinyl-L-lysyl-[protein] + acetyl-CoA = N(6)-biotinyl-L-lysyl-[protein] + malonyl-CoA. Its pathway is lipid metabolism; malonyl-CoA biosynthesis; malonyl-CoA from acetyl-CoA: step 1/1. Functionally, component of the acetyl coenzyme A carboxylase (ACC) complex. Biotin carboxylase (BC) catalyzes the carboxylation of biotin on its carrier protein (BCCP) and then the CO(2) group is transferred by the transcarboxylase to acetyl-CoA to form malonyl-CoA. In Sorangium cellulosum (strain So ce56) (Polyangium cellulosum (strain So ce56)), this protein is Acetyl-coenzyme A carboxylase carboxyl transferase subunit beta.